Reading from the N-terminus, the 374-residue chain is MKADFYETLCVSRNADEKELKSAFRKLAMQYHPDRNPGDMEAEKKFKEINEAYETLRDPQKRAAYDRFGHAAFEQGMGARGGFNGGGFADIFEDIFGDIMGGARQRRSGGRERGADLRYNMEITLEESFTGKTAQIRVPTAVTCDECAGSGARPGSSPVQCPMCHGAGRVRASTGGFFSIERTCPQCQGRGQIIDDPCRKCSGQGRLTEERSLSVNIPAGIEDGTRIRLAGEGEAGLRGGPPGDLYIFLSIKPHEFFQRDGADLYCKVPISMTTAALGGSFEVTTLDGTQTRVKVPEGTQSGRQFRLRGKGMPVLRQPQVGDLYIQVAVETPQNLTRRQRELLEEFEKISSGENSPQSTGFFARMKDFFETFGE.

A J domain is found at 4–69 (DFYETLCVSR…QKRAAYDRFG (66 aa)). A CR-type zinc finger spans residues 131 to 210 (GKTAQIRVPT…CSGQGRLTEE (80 aa)). Positions 144, 147, 161, 164, 184, 187, 198, and 201 each coordinate Zn(2+). CXXCXGXG motif repeat units lie at residues 144–151 (CDECAGSG), 161–168 (CPMCHGAG), 184–191 (CPQCQGRG), and 198–205 (CRKCSGQG).

This sequence belongs to the DnaJ family. Homodimer. Zn(2+) serves as cofactor.

It localises to the cytoplasm. Its function is as follows. Participates actively in the response to hyperosmotic and heat shock by preventing the aggregation of stress-denatured proteins and by disaggregating proteins, also in an autonomous, DnaK-independent fashion. Unfolded proteins bind initially to DnaJ; upon interaction with the DnaJ-bound protein, DnaK hydrolyzes its bound ATP, resulting in the formation of a stable complex. GrpE releases ADP from DnaK; ATP binding to DnaK triggers the release of the substrate protein, thus completing the reaction cycle. Several rounds of ATP-dependent interactions between DnaJ, DnaK and GrpE are required for fully efficient folding. Also involved, together with DnaK and GrpE, in the DNA replication of plasmids through activation of initiation proteins. The polypeptide is Chaperone protein DnaJ (Chelativorans sp. (strain BNC1)).